Reading from the N-terminus, the 318-residue chain is tRNA uridine(34) hydroxylase (318 aa).

One can recognise a Rhodanese domain in the interval 123 to 217 (EDDDTVIIDA…YGKDPETKGQ (95 aa)). Catalysis depends on C177, which acts as the Cysteine persulfide intermediate.

This sequence belongs to the TrhO family.

It carries out the reaction uridine(34) in tRNA + AH2 + O2 = 5-hydroxyuridine(34) in tRNA + A + H2O. Functionally, catalyzes oxygen-dependent 5-hydroxyuridine (ho5U) modification at position 34 in tRNAs. The protein is tRNA uridine(34) hydroxylase of Staphylococcus aureus (strain bovine RF122 / ET3-1).